The chain runs to 83 residues: Small ribosomal subunit protein uS17 (83 aa).

It belongs to the universal ribosomal protein uS17 family. Part of the 30S ribosomal subunit.

Functionally, one of the primary rRNA binding proteins, it binds specifically to the 5'-end of 16S ribosomal RNA. The sequence is that of Small ribosomal subunit protein uS17 from Gloeobacter violaceus (strain ATCC 29082 / PCC 7421).